The sequence spans 464 residues: 3-isopropylmalate dehydratase large subunit (464 aa).

Residues Cys345, Cys405, and Cys408 each coordinate [4Fe-4S] cluster.

This sequence belongs to the aconitase/IPM isomerase family. LeuC type 1 subfamily. In terms of assembly, heterodimer of LeuC and LeuD. The cofactor is [4Fe-4S] cluster.

It catalyses the reaction (2R,3S)-3-isopropylmalate = (2S)-2-isopropylmalate. The protein operates within amino-acid biosynthesis; L-leucine biosynthesis; L-leucine from 3-methyl-2-oxobutanoate: step 2/4. Catalyzes the isomerization between 2-isopropylmalate and 3-isopropylmalate, via the formation of 2-isopropylmaleate. This chain is 3-isopropylmalate dehydratase large subunit, found in Bacteroides fragilis (strain ATCC 25285 / DSM 2151 / CCUG 4856 / JCM 11019 / LMG 10263 / NCTC 9343 / Onslow / VPI 2553 / EN-2).